The sequence spans 100 residues: Small ribosomal subunit protein uS14m (100 aa).

This sequence belongs to the universal ribosomal protein uS14 family.

Its subcellular location is the mitochondrion. This Brassica napus (Rape) protein is Small ribosomal subunit protein uS14m (RPS14).